We begin with the raw amino-acid sequence, 182 residues long: Large ribosomal subunit protein uL16 (182 aa).

It belongs to the universal ribosomal protein uL16 family.

In Pyrobaculum neutrophilum (strain DSM 2338 / JCM 9278 / NBRC 100436 / V24Sta) (Thermoproteus neutrophilus), this protein is Large ribosomal subunit protein uL16.